A 283-amino-acid chain; its full sequence is Cyclin-C (283 aa).

The Cyclin N-terminal domain maps to 46 to 144 (NVIQALGEHL…ILECEFYLLE (99 aa)). Residues 252–283 (TILNKMPKPKPPPNSEGEQGTNGSQSSGYSQS) are disordered. Residues 267–283 (EGEQGTNGSQSSGYSQS) show a composition bias toward polar residues.

It belongs to the cyclin family. Cyclin C subfamily. Component of the Mediator complex. The cylin/CDK pair formed by ccnc/cdk8 also associates with the large subunit of RNA polymerase II.

The protein resides in the nucleus. In terms of biological role, component of the Mediator complex, a coactivator involved in regulated gene transcription of nearly all RNA polymerase II-dependent genes. Mediator functions as a bridge to convey information from gene-specific regulatory proteins to the basal RNA polymerase II transcription machinery. Mediator is recruited to promoters by direct interactions with regulatory proteins and serves as a scaffold for the assembly of a functional preinitiation complex with RNA polymerase II and the general transcription factors. Binds to and activates cyclin-dependent kinase cdk8 that phosphorylates the CTD (C-terminal domain) of the large subunit of RNA polymerase II (RNAp II), which may inhibit the formation of a transcription initiation complex. This is Cyclin-C (ccnc) from Xenopus tropicalis (Western clawed frog).